The following is a 207-amino-acid chain: Lipid A acyltransferase PagP (207 aa).

Positions 1–24 (MKFDLTTAYTLSIPLLASSGTVLA) are cleaved as a signal peptide. Active-site residues include His-79, Asp-122, and Ser-123.

Belongs to the lipid A palmitoyltransferase family. In terms of assembly, homodimer.

The protein localises to the cell outer membrane. It carries out the reaction a lipid A + a 1,2-diacyl-sn-glycero-3-phosphocholine = a hepta-acyl lipid A + a 2-acyl-sn-glycero-3-phosphocholine. The catalysed reaction is a lipid IVA + a 1,2-diacyl-sn-glycero-3-phosphocholine = a lipid IVB + a 2-acyl-sn-glycero-3-phosphocholine. The enzyme catalyses a lipid IIA + a 1,2-diacyl-sn-glycero-3-phosphocholine = a lipid IIB + a 2-acyl-sn-glycero-3-phosphocholine. Transfers a fatty acid residue from the sn-1 position of a phospholipid to the N-linked hydroxyfatty acid chain on the proximal unit of lipid A or its precursors. This Photorhabdus asymbiotica subsp. asymbiotica (strain ATCC 43949 / 3105-77) (Xenorhabdus luminescens (strain 2)) protein is Lipid A acyltransferase PagP.